A 433-amino-acid polypeptide reads, in one-letter code: Glutamate-1-semialdehyde 2,1-aminomutase (433 aa).

N6-(pyridoxal phosphate)lysine is present on Lys269.

It belongs to the class-III pyridoxal-phosphate-dependent aminotransferase family. HemL subfamily. Homodimer. Requires pyridoxal 5'-phosphate as cofactor.

Its subcellular location is the cytoplasm. It catalyses the reaction (S)-4-amino-5-oxopentanoate = 5-aminolevulinate. It functions in the pathway porphyrin-containing compound metabolism; protoporphyrin-IX biosynthesis; 5-aminolevulinate from L-glutamyl-tRNA(Glu): step 2/2. This Francisella philomiragia subsp. philomiragia (strain ATCC 25017 / CCUG 19701 / FSC 153 / O#319-036) protein is Glutamate-1-semialdehyde 2,1-aminomutase.